The chain runs to 520 residues: GMP synthase [glutamine-hydrolyzing] (520 aa).

Residues 9-202 form the Glutamine amidotransferase type-1 domain; sequence KILILDFGSQ…VRAICGCTGH (194 aa). The Nucleophile role is filled by cysteine 86. Residues histidine 176 and glutamate 178 contribute to the active site. The GMPS ATP-PPase domain occupies 203-395; it reads WTPGQIIEDA…LGLPHQMVWR (193 aa). Position 230–236 (230–236) interacts with ATP; that stretch reads SGGVDSS.

As to quaternary structure, homodimer.

The catalysed reaction is XMP + L-glutamine + ATP + H2O = GMP + L-glutamate + AMP + diphosphate + 2 H(+). It functions in the pathway purine metabolism; GMP biosynthesis; GMP from XMP (L-Gln route): step 1/1. In terms of biological role, catalyzes the synthesis of GMP from XMP. The polypeptide is GMP synthase [glutamine-hydrolyzing] (Pelobacter propionicus (strain DSM 2379 / NBRC 103807 / OttBd1)).